We begin with the raw amino-acid sequence, 425 residues long: Glutamyl-tRNA reductase (425 aa).

Substrate contacts are provided by residues Thr-49–Arg-52, Ser-109, Glu-114–Gln-116, and Gln-120. Cys-50 functions as the Nucleophile in the catalytic mechanism. Gly-189–Gly-194 is a binding site for NADP(+).

Belongs to the glutamyl-tRNA reductase family. Homodimer.

It carries out the reaction (S)-4-amino-5-oxopentanoate + tRNA(Glu) + NADP(+) = L-glutamyl-tRNA(Glu) + NADPH + H(+). It functions in the pathway porphyrin-containing compound metabolism; protoporphyrin-IX biosynthesis; 5-aminolevulinate from L-glutamyl-tRNA(Glu): step 1/2. The protein operates within porphyrin-containing compound metabolism; chlorophyll biosynthesis. Catalyzes the NADPH-dependent reduction of glutamyl-tRNA(Glu) to glutamate 1-semialdehyde (GSA). The chain is Glutamyl-tRNA reductase from Chlorobium phaeobacteroides (strain DSM 266 / SMG 266 / 2430).